We begin with the raw amino-acid sequence, 122 residues long: MPTINQLVRKPRKTPARINRVPALNKNPLKRGICSKVYTTTPKKPNSALRKVARVRLSGGAEVIAYIPGEGHNLQEHSVVCIRGGRVKDLPGVRYHIVRGVFDTEGVKGRKKGRSKYGAKKS.

D89 is modified (3-methylthioaspartic acid).

It belongs to the universal ribosomal protein uS12 family. Part of the 30S ribosomal subunit. Contacts proteins S8 and S17. May interact with IF1 in the 30S initiation complex.

Its function is as follows. With S4 and S5 plays an important role in translational accuracy. In terms of biological role, interacts with and stabilizes bases of the 16S rRNA that are involved in tRNA selection in the A site and with the mRNA backbone. Located at the interface of the 30S and 50S subunits, it traverses the body of the 30S subunit contacting proteins on the other side and probably holding the rRNA structure together. The combined cluster of proteins S8, S12 and S17 appears to hold together the shoulder and platform of the 30S subunit. This chain is Small ribosomal subunit protein uS12, found in Neorickettsia sennetsu (strain ATCC VR-367 / Miyayama) (Ehrlichia sennetsu).